The sequence spans 308 residues: N-acetylmuramic acid 6-phosphate etherase (308 aa).

Positions 63–226 (IVDAFACGGR…STASMIRSGK (164 aa)) constitute an SIS domain. E91 serves as the catalytic Proton donor. The active site involves E122.

The protein belongs to the GCKR-like family. MurNAc-6-P etherase subfamily. As to quaternary structure, homodimer.

It catalyses the reaction N-acetyl-D-muramate 6-phosphate + H2O = N-acetyl-D-glucosamine 6-phosphate + (R)-lactate. The protein operates within amino-sugar metabolism; 1,6-anhydro-N-acetylmuramate degradation. It functions in the pathway amino-sugar metabolism; N-acetylmuramate degradation. Its pathway is cell wall biogenesis; peptidoglycan recycling. Specifically catalyzes the cleavage of the D-lactyl ether substituent of MurNAc 6-phosphate, producing GlcNAc 6-phosphate and D-lactate. Together with AnmK, is also required for the utilization of anhydro-N-acetylmuramic acid (anhMurNAc) either imported from the medium or derived from its own cell wall murein, and thus plays a role in cell wall recycling. This is N-acetylmuramic acid 6-phosphate etherase from Colwellia psychrerythraea (strain 34H / ATCC BAA-681) (Vibrio psychroerythus).